The following is a 640-amino-acid chain: Preterminal protein (640 aa).

The interval 232-257 is disordered; that stretch reads PSQEGEGEERENPDRASSRPRPQETV. The Nuclear localization signal motif lies at 351-360; it reads RLPVRRRRRR. Serine 549 carries the post-translational modification O-(5'-phospho-DNA)-serine. A disordered region spans residues 614 to 640; that stretch reads GADVPLPAMPPGPEPPLPPGARPRHRF. A compositionally biased stretch (pro residues) spans 620 to 634; that stretch reads PAMPPGPEPPLPPGA.

Belongs to the adenoviridae terminal protein family. In terms of assembly, heterodimer with the polymerase; this heterodimer binds to bp 9 to 18 of the genome. Interacts with host POU2F1; POU2F1 binds to the auxiliary sequences in the inverted terminal repeats and tethers the pTP-POL heterodimer to the origin DNA thereby participating in the assembly of the pre-initiation complex (POL-TP-DBP-NFIA-POU2F1). Preterminal protein is used to replicate viral genome, upon genomic encapsidation it is processed first into iTP and finally into TP by adenovirus protease.

It localises to the host nucleus matrix. Functionally, protein covalently bound to the viral DNA that acts as a primer for viral genomic replication by DNA strand displacement. Assembles on the viral origin of replication in an initiation complex with viral polymerase, DBP, host NFIA and host POU2F1/OCT1. During initiation, the polymerase covalently couples the first dCTP with Ser-580 of pTP. The terminal protein stimulates the template activity over 20 fold compared to protein-free templates. Neo-synthesized viral genomes are linked to two preterminal proteins, one for each 5' end. These new genomes are encapsidated in the nucleus, and during capsid maturation by viral protease, preterminal protein is first cleaved into intermediary (iTP), then into mature TP. May play a role in host nuclear matrix localization of genomic DNA. This Human adenovirus B serotype 7 (HAdV-7) protein is Preterminal protein.